Here is a 396-residue protein sequence, read N- to C-terminus: Tryptophan synthase beta chain (396 aa).

Lys86 carries the N6-(pyridoxal phosphate)lysine modification.

This sequence belongs to the TrpB family. In terms of assembly, tetramer of two alpha and two beta chains. Pyridoxal 5'-phosphate serves as cofactor.

The enzyme catalyses (1S,2R)-1-C-(indol-3-yl)glycerol 3-phosphate + L-serine = D-glyceraldehyde 3-phosphate + L-tryptophan + H2O. It participates in amino-acid biosynthesis; L-tryptophan biosynthesis; L-tryptophan from chorismate: step 5/5. Its function is as follows. The beta subunit is responsible for the synthesis of L-tryptophan from indole and L-serine. In Erwinia tasmaniensis (strain DSM 17950 / CFBP 7177 / CIP 109463 / NCPPB 4357 / Et1/99), this protein is Tryptophan synthase beta chain.